The following is a 323-amino-acid chain: GDP-L-fucose synthase 1 (323 aa).

N-acetylalanine is present on alanine 2. 23–29 (GHRGLVG) is a binding site for NADP(+). Residue tyrosine 149 is the Proton donor/acceptor of the active site. Residues lysine 153, 176-179 (PTNL), and histidine 192 contribute to the NADP(+) site. Substrate-binding residues include arginine 200, tryptophan 215, arginine 222, and aspartate 282.

Belongs to the NAD(P)-dependent epimerase/dehydratase family. Fucose synthase subfamily. In terms of assembly, binds and stabilizes MUR1. Homodimer. Highly expressed in roots and flowers, less abundant in leaves, stems and siliques.

It catalyses the reaction GDP-beta-L-fucose + NADP(+) = GDP-4-dehydro-alpha-D-rhamnose + NADPH + H(+). Its pathway is nucleotide-sugar biosynthesis; GDP-L-fucose biosynthesis via de novo pathway; GDP-L-fucose from GDP-alpha-D-mannose: step 2/2. Functionally, catalyzes the two-step NADP-dependent conversion of GDP-4-dehydro-6-deoxy-D-mannose to GDP-fucose, involving an epimerase and a reductase reaction. Not involved in the synthesis of GDP-L-galactose from GDP-D-mannose. This is GDP-L-fucose synthase 1 (GER1) from Arabidopsis thaliana (Mouse-ear cress).